We begin with the raw amino-acid sequence, 293 residues long: Non-homologous end joining protein Ku (293 aa).

Residues 10 to 195 enclose the Ku domain; the sequence is ISFGLVHIPV…KLDKRELEMA (186 aa). The interval 216 to 229 is required for dimerization; sequence SDKIMKLVEEKAAK. The disordered stretch occupies residues 260 to 293; it reads RSRAGGGKDKGSEKAGADAKGRAKSGASRSRRKA. The segment covering 265–280 has biased composition (basic and acidic residues); sequence GGKDKGSEKAGADAKG.

This sequence belongs to the prokaryotic Ku family. In terms of assembly, homodimer, may form higher-order multimers on DNA. Non-dimerized protein does not stimulate LigD ligase activity. Probably interacts with LigD.

In terms of biological role, with LigD forms a non-homologous end joining (NHEJ) DNA repair enzyme, which repairs dsDNA breaks with reduced fidelity. Stimulates rNTP addition to DSB and end joining (ligation) of linear DNA by LigD, on 3'-overhangs and probably also 5'-overhangs and blunt dsDNA breaks. Binds both ends of linear dsDNA protecting it from exonuclease activity. This is Non-homologous end joining protein Ku from Pseudomonas aeruginosa (strain ATCC 15692 / DSM 22644 / CIP 104116 / JCM 14847 / LMG 12228 / 1C / PRS 101 / PAO1).